A 110-amino-acid chain; its full sequence is BolA-like protein 3 (110 aa).

This sequence belongs to the BolA/IbaG family. In terms of assembly, interacts with NFU1.

It is found in the mitochondrion. In terms of biological role, acts as a mitochondrial iron-sulfur (Fe-S) cluster assembly factor that facilitates (Fe-S) cluster insertion into a subset of mitochondrial proteins. Probably acts together with NFU1. In Mus musculus (Mouse), this protein is BolA-like protein 3 (Bola3).